We begin with the raw amino-acid sequence, 337 residues long: Glyceraldehyde-3-phosphate dehydrogenase 1, cytosolic (337 aa).

The segment at 1–151 is binding to NAD; that stretch reads MGKIKIGING…YTSDVNIVSN (151 aa). NAD(+) contacts are provided by residues 13-14, Asp-35, and Arg-82; that span reads RI. Residues 152–337 form a catalytic region; that stretch reads ASCTTNCLAP…DLIRHMFKTQ (186 aa). D-glyceraldehyde 3-phosphate contacts are provided by residues 153 to 155, Thr-184, 213 to 214, and Arg-236; these read SCT and TG. Cys-154 acts as the Nucleophile in catalysis. An NAD(+)-binding site is contributed by Asn-318.

This sequence belongs to the glyceraldehyde-3-phosphate dehydrogenase family. As to quaternary structure, homotetramer.

The protein localises to the cytoplasm. The catalysed reaction is D-glyceraldehyde 3-phosphate + phosphate + NAD(+) = (2R)-3-phospho-glyceroyl phosphate + NADH + H(+). It participates in carbohydrate degradation; glycolysis; pyruvate from D-glyceraldehyde 3-phosphate: step 1/5. Its function is as follows. Key enzyme in glycolysis that catalyzes the first step of the pathway by converting D-glyceraldehyde 3-phosphate (G3P) into 3-phospho-D-glyceroyl phosphate. Essential for the maintenance of cellular ATP levels and carbohydrate metabolism. In Zea mays (Maize), this protein is Glyceraldehyde-3-phosphate dehydrogenase 1, cytosolic (GAPC1).